We begin with the raw amino-acid sequence, 82 residues long: uncharacterized protein (82 aa).

This is an uncharacterized protein from Ictalurid herpesvirus 1 (strain Auburn) (IcHV-1).